The chain runs to 342 residues: L-threonine 3-dehydrogenase (342 aa).

Cys-38 contributes to the Zn(2+) binding site. Active-site charge relay system residues include Thr-40 and His-43. Positions 63, 64, 93, 96, 99, and 107 each coordinate Zn(2+). NAD(+) contacts are provided by residues Ile-175, Asp-195, Arg-200, 262–264 (LGI), and 286–287 (IY).

This sequence belongs to the zinc-containing alcohol dehydrogenase family. As to quaternary structure, homotetramer. The cofactor is Zn(2+).

The protein localises to the cytoplasm. The catalysed reaction is L-threonine + NAD(+) = (2S)-2-amino-3-oxobutanoate + NADH + H(+). The protein operates within amino-acid degradation; L-threonine degradation via oxydo-reductase pathway; glycine from L-threonine: step 1/2. Catalyzes the NAD(+)-dependent oxidation of L-threonine to 2-amino-3-ketobutyrate. The sequence is that of L-threonine 3-dehydrogenase from Burkholderia vietnamiensis (strain G4 / LMG 22486) (Burkholderia cepacia (strain R1808)).